Reading from the N-terminus, the 289-residue chain is MFFEIALIGTTASGKTYIADTLAREFDAVVLSLDSLCVYKEINIASAKPSQDDLASIKYFGVNLLSVNEHFNVELFIREYQKAKEFALARNLPLIIVGGTGFYLKTMIDGLSEKTLESKSSLNNDEIYTLLLNIDPNYKIEKNDTYRLKKWLGIYEQTREIPSEFLKRTQKTGVLKDIEIYELAWDKEILKKRIQTRTKEMLDNGLLDEAKILFYKFDHKLKALNSIGLKECKEYLDGEISFKDLENLITIHTTQLAKRQRTFNKKFQSKALEFDKALATLRMKFSIEK.

An ATP-binding site is contributed by 9–16; it reads GTTASGKT. 11–16 contacts substrate; sequence TASGKT. Positions 34–37 are interaction with substrate tRNA; that stretch reads DSLC.

Belongs to the IPP transferase family. In terms of assembly, monomer. Requires Mg(2+) as cofactor.

It carries out the reaction adenosine(37) in tRNA + dimethylallyl diphosphate = N(6)-dimethylallyladenosine(37) in tRNA + diphosphate. Functionally, catalyzes the transfer of a dimethylallyl group onto the adenine at position 37 in tRNAs that read codons beginning with uridine, leading to the formation of N6-(dimethylallyl)adenosine (i(6)A). This Campylobacter jejuni subsp. doylei (strain ATCC BAA-1458 / RM4099 / 269.97) protein is tRNA dimethylallyltransferase.